A 328-amino-acid chain; its full sequence is 4-hydroxythreonine-4-phosphate dehydrogenase (328 aa).

Substrate is bound by residues H135 and T136. Residues H165, H210, and H265 each coordinate a divalent metal cation. Substrate-binding residues include K273, N282, and R291.

This sequence belongs to the PdxA family. In terms of assembly, homodimer. Requires Zn(2+) as cofactor. It depends on Mg(2+) as a cofactor. Co(2+) is required as a cofactor.

It localises to the cytoplasm. The catalysed reaction is 4-(phosphooxy)-L-threonine + NAD(+) = 3-amino-2-oxopropyl phosphate + CO2 + NADH. It functions in the pathway cofactor biosynthesis; pyridoxine 5'-phosphate biosynthesis; pyridoxine 5'-phosphate from D-erythrose 4-phosphate: step 4/5. Functionally, catalyzes the NAD(P)-dependent oxidation of 4-(phosphooxy)-L-threonine (HTP) into 2-amino-3-oxo-4-(phosphooxy)butyric acid which spontaneously decarboxylates to form 3-amino-2-oxopropyl phosphate (AHAP). In Pseudomonas aeruginosa (strain ATCC 15692 / DSM 22644 / CIP 104116 / JCM 14847 / LMG 12228 / 1C / PRS 101 / PAO1), this protein is 4-hydroxythreonine-4-phosphate dehydrogenase.